Consider the following 51-residue polypeptide: Large ribosomal subunit protein eL39 (51 aa).

It belongs to the eukaryotic ribosomal protein eL39 family.

The protein is Large ribosomal subunit protein eL39 of Methanobrevibacter smithii (strain ATCC 35061 / DSM 861 / OCM 144 / PS).